Consider the following 856-residue polypeptide: Increased rDNA silencing protein 4 (856 aa).

Disordered stretches follow at residues 1-204, 230-563, and 589-672; these read MSAS…EPKS, KQEE…PTPE, and TSLE…DEDL. Low complexity-rich tracts occupy residues 12–42, 67–84, and 111–130; these read GPAS…ATLA, VPTP…RTVG, and SRVV…AGRT. Residues 152 to 162 show a composition bias toward basic and acidic residues; that stretch reads HVEERANDHAP. Residues 194–204 show a composition bias toward low complexity; it reads ASAKPSSEPKS. Basic residues predominate over residues 239 to 254; that stretch reads KKKKKKKPRPASKTQH. Composition is skewed to polar residues over residues 255–275 and 303–315; these read HQTL…ENQC and SLST…SSTG. Positions 329–347 are enriched in basic and acidic residues; sequence GETRNRNGDVRDKPSREGG. 3 stretches are compositionally biased toward polar residues: residues 396 to 410, 451 to 468, and 478 to 488; these read PVSQ…TIIS, RVVS…QSAE, and RNSTSSDETFV. Positions 503–514 are enriched in basic and acidic residues; it reads KELERVRPRLDR. The segment covering 517–535 has biased composition (low complexity); it reads TSTSSRASRVSTPASVRSP. Positions 603-620 are enriched in basic residues; sequence RRGHRHHHLPHPHLRHRT. Positions 644–654 are enriched in polar residues; the sequence is PSRQTEHTQPA. The EH domain occupies 743-832; that stretch reads DSLGQVDLSR…EGVWESAMDR (90 aa).

The protein belongs to the IRS4 family.

In terms of biological role, positive regulator of phosphatidylinositol 4,5-bisphosphate turnover and negatively regulates signaling through the cell integrity pathway. Involved in rDNA silencing. The chain is Increased rDNA silencing protein 4 (irs-4) from Neurospora crassa (strain ATCC 24698 / 74-OR23-1A / CBS 708.71 / DSM 1257 / FGSC 987).